Consider the following 180-residue polypeptide: Dephospho-CoA kinase (180 aa).

The DPCK domain maps to 2–180; the sequence is VIGVTGKIGT…VMKLVWEKRE (179 aa). An ATP-binding site is contributed by 10–15; the sequence is GTGKST.

Belongs to the CoaE family.

The protein resides in the cytoplasm. It catalyses the reaction 3'-dephospho-CoA + ATP = ADP + CoA + H(+). It participates in cofactor biosynthesis; coenzyme A biosynthesis; CoA from (R)-pantothenate: step 5/5. Catalyzes the phosphorylation of the 3'-hydroxyl group of dephosphocoenzyme A to form coenzyme A. This chain is Dephospho-CoA kinase, found in Thermotoga maritima (strain ATCC 43589 / DSM 3109 / JCM 10099 / NBRC 100826 / MSB8).